The primary structure comprises 176 residues: 3-hydroxydecanoyl-[acyl-carrier-protein] dehydratase (176 aa).

Residue His-70 is part of the active site.

It belongs to the thioester dehydratase family. FabA subfamily. As to quaternary structure, homodimer.

The protein resides in the cytoplasm. It carries out the reaction a (3R)-hydroxyacyl-[ACP] = a (2E)-enoyl-[ACP] + H2O. The enzyme catalyses (3R)-hydroxydecanoyl-[ACP] = (2E)-decenoyl-[ACP] + H2O. It catalyses the reaction (2E)-decenoyl-[ACP] = (3Z)-decenoyl-[ACP]. It participates in lipid metabolism; fatty acid biosynthesis. In terms of biological role, necessary for the introduction of cis unsaturation into fatty acids. Catalyzes the dehydration of (3R)-3-hydroxydecanoyl-ACP to E-(2)-decenoyl-ACP and then its isomerization to Z-(3)-decenoyl-ACP. Can catalyze the dehydratase reaction for beta-hydroxyacyl-ACPs with saturated chain lengths up to 16:0, being most active on intermediate chain length. The sequence is that of 3-hydroxydecanoyl-[acyl-carrier-protein] dehydratase from Alkalilimnicola ehrlichii (strain ATCC BAA-1101 / DSM 17681 / MLHE-1).